The sequence spans 567 residues: MEYDYIIIGAGSAGNVLAARLTEDADVTVLLLEAGGPDYRLDFRTQMPAALAFPLQGKRYNWAYETDPEPHMNNRRMECGRGKGLGGSSLINGMCYIRGNAMDFDHWASLSGLEDWSYLDCLPYFRKAETRDIGPNDFHGGEGPVNVTTPKIGNNPLFHAMVAAGVQAGYPRTDDLNGYQQEGFGPMDRTVTPKGRRASTARGYLDQARPRNNLTIITHALTDRILFEGKRATGVRYLKGDAGTGQTAYARREVLLCGGAIASPQILQRSGIGPAELLQRLDIPLVQALPGVGENLQDHLEMYLQYSCKQPVSLYPALLWFNQPKIGIEWLFNGTGVGASNQFEAGGFIRSRDAFTWPNIQYHFLPVAINYNGSNAVKEHGFQAHVGSMRSPSRGRIQVKSKDPRQHPSILFNYMSSEQDWHEFRDAIRITREIIAQPALDPYRGREISPGANVQNDDELDAFIREHAETAYHPSCSCKMGDDKMAVVDGQGRVHGVQGLRVVDASIMPQIITGNLNATTIMIAEKIADRIRGCQPLAKSNAAYFIAGDTPARTSPVRHSLPVTSYP.

FAD is bound at residue 4-33; the sequence is DYIIIGAGSAGNVLAARLTEDADVTVLLLE. H473 serves as the catalytic Proton acceptor.

Belongs to the GMC oxidoreductase family. FAD is required as a cofactor.

The catalysed reaction is choline + A = betaine aldehyde + AH2. The enzyme catalyses betaine aldehyde + NAD(+) + H2O = glycine betaine + NADH + 2 H(+). It participates in amine and polyamine biosynthesis; betaine biosynthesis via choline pathway; betaine aldehyde from choline (cytochrome c reductase route): step 1/1. Its function is as follows. Involved in the biosynthesis of the osmoprotectant glycine betaine. Catalyzes the oxidation of choline to betaine aldehyde and betaine aldehyde to glycine betaine at the same rate. The chain is Oxygen-dependent choline dehydrogenase from Yersinia pseudotuberculosis serotype O:1b (strain IP 31758).